A 334-amino-acid polypeptide reads, in one-letter code: Putative lysine N-acyltransferase C17G9.06c (334 aa).

Residue histidine 248 coordinates substrate. The active-site Proton acceptor is the glutamate 286.

It belongs to the lysine N-acyltransferase mbtK family.

The protein resides in the cytoplasm. Its subcellular location is the nucleus. The protein is Putative lysine N-acyltransferase C17G9.06c of Schizosaccharomyces pombe (strain 972 / ATCC 24843) (Fission yeast).